Consider the following 588-residue polypeptide: Oxidoreductase NdmD (588 aa).

The Rieske domain maps to 9–114 (WFPIATTEDL…VREKHGFIWT (106 aa)). Positions 50, 52, 69, and 72 each coordinate [2Fe-2S] cluster. The region spanning 272 to 373 (PTHYICEVVT…TLPRNGFPLV (102 aa)) is the FAD-binding FR-type domain. In terms of domain architecture, 2Fe-2S ferredoxin-type spans 503-588 (YEVELKKTGQ…CKSKKIVLDL (86 aa)). Cysteine 537, cysteine 542, cysteine 545, and cysteine 575 together coordinate [2Fe-2S] cluster.

The cofactor is [2Fe-2S] cluster.

Its function is as follows. Involved in the caffeine degradation, which is the essential first step for assimilating the carbon and nitrogen in caffeine. Catalyzes the oxidation of NADH and transfers electrons to NdmA and NdmB, which catalyze the N-demethylation reactions. The protein is Oxidoreductase NdmD (ndmD) of Pseudomonas putida (Arthrobacter siderocapsulatus).